Consider the following 439-residue polypeptide: FBD-associated F-box protein At5g56380 (439 aa).

Residues 1 to 61 (MDRISHLADE…LPETWGYQEP (61 aa)) enclose the F-box domain. The FBD domain occupies 358–406 (WNQPGSVPRCLSSSLETLEWVEYGGTHEEKELSTYLFKTAVCFKKASFT).

The sequence is that of FBD-associated F-box protein At5g56380 from Arabidopsis thaliana (Mouse-ear cress).